Consider the following 295-residue polypeptide: MEFTKMHALGNDYIVINEFDGEKVKEEEKAEFSRKICRRGFSVGADGVIFIQKPTSDEYDVRFRIFNSDGSEAEMCGNGIRCFSKYVYERIMKKNPLKVETKGGLRVSEMEIEGDEVKKIKVYMGVPKFKLKDIPMVVDGYKEDDEFLNGELKLKNPYLPKVKLSVVNVGNPHAVIFVEDNNIDLDFVREHLDVIGKEIEHHEAFPERINVHFVKVLNPNEIRIVTWERGAGYTTACGTGTTASVIMAHKLGKTNNRVLAHLDGGDLEIEIKDDGVYMIGDAVMVYDAKLINIGW.

The substrate site is built by Asn-11 and Asn-67. Cys-76 serves as the catalytic Proton donor. Residues 77 to 78 (GN), Asn-171, Asn-210, and 228 to 229 (ER) each bind substrate. The active-site Proton acceptor is Cys-237. Residue 238-239 (GT) coordinates substrate.

The protein belongs to the diaminopimelate epimerase family. Homodimer.

It is found in the cytoplasm. It carries out the reaction (2S,6S)-2,6-diaminopimelate = meso-2,6-diaminopimelate. The protein operates within amino-acid biosynthesis; L-lysine biosynthesis via DAP pathway; DL-2,6-diaminopimelate from LL-2,6-diaminopimelate: step 1/1. Functionally, catalyzes the stereoinversion of LL-2,6-diaminopimelate (L,L-DAP) to meso-diaminopimelate (meso-DAP), a precursor of L-lysine. The sequence is that of Diaminopimelate epimerase from Methanocaldococcus jannaschii (strain ATCC 43067 / DSM 2661 / JAL-1 / JCM 10045 / NBRC 100440) (Methanococcus jannaschii).